The chain runs to 193 residues: Holliday junction branch migration complex subunit RuvA (193 aa).

A domain I region spans residues 1 to 64; the sequence is MIGRIAGILL…EDAHLLYGFL (64 aa). The tract at residues 65-139 is domain II; sequence TQQERTTFRE…GKLGADLGAL (75 aa). The tract at residues 139–143 is flexible linker; it reads LAGAA. Residues 144-193 are domain III; it reads SPSDHATDILNALLALGYSEKEGLAAIKNVPAGTGVSEGIKLALKALSKA.

It belongs to the RuvA family. Homotetramer. Forms an RuvA(8)-RuvB(12)-Holliday junction (HJ) complex. HJ DNA is sandwiched between 2 RuvA tetramers; dsDNA enters through RuvA and exits via RuvB. An RuvB hexamer assembles on each DNA strand where it exits the tetramer. Each RuvB hexamer is contacted by two RuvA subunits (via domain III) on 2 adjacent RuvB subunits; this complex drives branch migration. In the full resolvosome a probable DNA-RuvA(4)-RuvB(12)-RuvC(2) complex forms which resolves the HJ.

The protein resides in the cytoplasm. The RuvA-RuvB-RuvC complex processes Holliday junction (HJ) DNA during genetic recombination and DNA repair, while the RuvA-RuvB complex plays an important role in the rescue of blocked DNA replication forks via replication fork reversal (RFR). RuvA specifically binds to HJ cruciform DNA, conferring on it an open structure. The RuvB hexamer acts as an ATP-dependent pump, pulling dsDNA into and through the RuvAB complex. HJ branch migration allows RuvC to scan DNA until it finds its consensus sequence, where it cleaves and resolves the cruciform DNA. This chain is Holliday junction branch migration complex subunit RuvA, found in Burkholderia cenocepacia (strain ATCC BAA-245 / DSM 16553 / LMG 16656 / NCTC 13227 / J2315 / CF5610) (Burkholderia cepacia (strain J2315)).